Reading from the N-terminus, the 104-residue chain is Co-chaperonin GroES 3 (104 aa).

Belongs to the GroES chaperonin family. Heptamer of 7 subunits arranged in a ring. Interacts with the chaperonin GroEL.

The protein localises to the cytoplasm. Together with the chaperonin GroEL, plays an essential role in assisting protein folding. The GroEL-GroES system forms a nano-cage that allows encapsulation of the non-native substrate proteins and provides a physical environment optimized to promote and accelerate protein folding. GroES binds to the apical surface of the GroEL ring, thereby capping the opening of the GroEL channel. The chain is Co-chaperonin GroES 3 from Bradyrhizobium diazoefficiens (strain JCM 10833 / BCRC 13528 / IAM 13628 / NBRC 14792 / USDA 110).